The sequence spans 613 residues: Probable indole-3-acetic acid-amido synthetase GH3.12 (613 aa).

The protein belongs to the IAA-amido conjugating enzyme family. Expressed in roots.

May catalyze the synthesis of indole-3-acetic acid (IAA)-amino acid conjugates, providing a mechanism for the plant to cope with the presence of excess auxin. This is Probable indole-3-acetic acid-amido synthetase GH3.12 (GH3.12) from Oryza sativa subsp. japonica (Rice).